The following is a 440-amino-acid chain: Protein disulfide-isomerase A6 homolog (440 aa).

Positions Met1–Gly18 are cleaved as a signal peptide. Thioredoxin domains follow at residues Met19–Lys131 and Leu127–Gln273. Active-site nucleophile residues include Cys54 and Cys57. An intrachain disulfide couples Cys54 to Cys57. Residues Leu138–Asn164 form a disordered region. The segment covering Gly139 to Gly149 has biased composition (low complexity). Residues Ser150 to Gly163 are compositionally biased toward gly residues. Catalysis depends on nucleophile residues Cys194 and Cys197. Cysteines 194 and 197 form a disulfide. Positions Asp404–Asp426 are disordered. Positions Gln410–Asp419 are enriched in basic and acidic residues. The Prevents secretion from ER motif lies at Lys437–Leu440.

Belongs to the protein disulfide isomerase family.

Its subcellular location is the endoplasmic reticulum lumen. It carries out the reaction Catalyzes the rearrangement of -S-S- bonds in proteins.. Its function is as follows. May function as a chaperone that inhibits aggregation of misfolded proteins. May negatively regulate the unfolded protein response (UPR) through binding to UPR sensors. The polypeptide is Protein disulfide-isomerase A6 homolog (Caenorhabditis elegans).